A 448-amino-acid polypeptide reads, in one-letter code: Glutamyl-tRNA reductase (448 aa).

Substrate is bound by residues 49-52 (TCNR), serine 109, 114-116 (ETQ), and glutamine 120. The active-site Nucleophile is the cysteine 50. Position 189–194 (189–194 (GAGEMG)) interacts with NADP(+).

The protein belongs to the glutamyl-tRNA reductase family. Homodimer.

It catalyses the reaction (S)-4-amino-5-oxopentanoate + tRNA(Glu) + NADP(+) = L-glutamyl-tRNA(Glu) + NADPH + H(+). It participates in porphyrin-containing compound metabolism; protoporphyrin-IX biosynthesis; 5-aminolevulinate from L-glutamyl-tRNA(Glu): step 1/2. Functionally, catalyzes the NADPH-dependent reduction of glutamyl-tRNA(Glu) to glutamate 1-semialdehyde (GSA). This chain is Glutamyl-tRNA reductase, found in Staphylococcus epidermidis (strain ATCC 35984 / DSM 28319 / BCRC 17069 / CCUG 31568 / BM 3577 / RP62A).